Consider the following 276-residue polypeptide: Large ribosomal subunit protein uL2 (276 aa).

2 disordered regions span residues 1–20 (MGIK…TTND) and 219–276 (TVRG…RRKK). Positions 7 to 20 (NPTTNGRRNMTTND) are enriched in polar residues.

It belongs to the universal ribosomal protein uL2 family. Part of the 50S ribosomal subunit. Forms a bridge to the 30S subunit in the 70S ribosome.

Functionally, one of the primary rRNA binding proteins. Required for association of the 30S and 50S subunits to form the 70S ribosome, for tRNA binding and peptide bond formation. It has been suggested to have peptidyltransferase activity; this is somewhat controversial. Makes several contacts with the 16S rRNA in the 70S ribosome. The polypeptide is Large ribosomal subunit protein uL2 (Bacillus cereus (strain G9842)).